Consider the following 317-residue polypeptide: Transcription initiation factor IIB 3 (317 aa).

Positions 1-14 (MERATREREKEQRE) are enriched in basic and acidic residues. A disordered region spans residues 1 to 25 (MERATREREKEQREQAQTNDEAQQC). The segment at 21 to 50 (EAQQCPECNSANVITDQSERVCEDCGLVLE) adopts a TFIIB-type zinc-finger fold. Zn(2+)-binding residues include C25, C28, C42, and C45. The tract at residues 62–83 (AFNSSERDQKSRVGAPTTKTMH) is disordered. Repeat copies occupy residues 136 to 219 (SEID…AQEL) and 230 to 311 (EYLP…EQIE).

It belongs to the TFIIB family.

Functionally, stabilizes TBP binding to an archaeal box-A promoter. Also responsible for recruiting RNA polymerase II to the pre-initiation complex (DNA-TBP-TFIIB). This is Transcription initiation factor IIB 3 from Halobacterium salinarum (strain ATCC 700922 / JCM 11081 / NRC-1) (Halobacterium halobium).